A 759-amino-acid polypeptide reads, in one-letter code: TY1 enhancer activator (759 aa).

Residues 1–61 are disordered; it reads MTAPLWPNKN…GTGANTLTNG (61 aa). The residue at position 22 (Thr-22) is a Phosphothreonine. Positions 30–51 are enriched in low complexity; the sequence is SSTNASSNEENSRSSSAANVRS. A DNA-binding region (zn(2)-C6 fungal-type) is located at residues 70–96; that stretch reads CTNCRNRRKKCDLGFPCGNCSRLELVC. Positions 229-254 are disordered; sequence LTPQGEKKKKPLVKGSLYPEGPVSYK. A 9aaTAD motif is present at residues 744-752; it reads DDLIRELFG. Thr-755 is subject to Phosphothreonine.

The protein resides in the nucleus. Functionally, TY1 element enhancer binding protein. Binds to the DNA sequence 5'-TCGGTGGTATTATTCCGA-3'. The protein is TY1 enhancer activator (TEA1) of Saccharomyces cerevisiae (strain ATCC 204508 / S288c) (Baker's yeast).